The primary structure comprises 122 residues: Large ribosomal subunit protein uL14c (122 aa).

Belongs to the universal ribosomal protein uL14 family. As to quaternary structure, part of the 50S ribosomal subunit.

Its subcellular location is the plastid. The protein resides in the chloroplast. Binds to 23S rRNA. The protein is Large ribosomal subunit protein uL14c of Daucus carota (Wild carrot).